The sequence spans 879 residues: Translation initiation factor IF-2 (879 aa).

Disordered stretches follow at residues 45–216 and 228–293; these read AGHM…ERKR and SYEE…EKPV. Basic and acidic residues-rich tracts occupy residues 60–72, 83–99, and 107–163; these read NAAKSDNKSDKNS, RKTDARKSQSSEKKISP, and AEKK…ERLQ. Positions 164 to 173 are enriched in low complexity; that stretch reads MEAALQAQMQ. Composition is skewed to basic and acidic residues over residues 174–216, 228–271, and 280–291; these read EQER…ERKR, SYEE…ERRN, and RNNDNKKGKFEK. Residues 380 to 549 enclose the tr-type G domain; it reads VRAPVVTIMG…LIQAEMLELT (170 aa). The G1 stretch occupies residues 389–396; it reads GHVDHGKT. GTP is bound at residue 389–396; the sequence is GHVDHGKT. Positions 414–418 are G2; it reads GITQH. Residues 435 to 438 form a G3 region; that stretch reads DTPG. Residues 435–439 and 489–492 contribute to the GTP site; these read DTPGH and NKMD. Positions 489 to 492 are G4; it reads NKMD. Positions 525 to 527 are G5; that stretch reads SAK.

The protein belongs to the TRAFAC class translation factor GTPase superfamily. Classic translation factor GTPase family. IF-2 subfamily.

Its subcellular location is the cytoplasm. Its function is as follows. One of the essential components for the initiation of protein synthesis. Protects formylmethionyl-tRNA from spontaneous hydrolysis and promotes its binding to the 30S ribosomal subunits. Also involved in the hydrolysis of GTP during the formation of the 70S ribosomal complex. This chain is Translation initiation factor IF-2, found in Dichelobacter nodosus (strain VCS1703A).